The chain runs to 292 residues: Formamidopyrimidine-DNA glycosylase (292 aa).

Pro-2 functions as the Schiff-base intermediate with DNA in the catalytic mechanism. Glu-3 serves as the catalytic Proton donor. Catalysis depends on Lys-60, which acts as the Proton donor; for beta-elimination activity. Positions 109, 128, and 173 each coordinate DNA. The FPG-type zinc finger occupies 258–292 (NVYRRTGRECRKCGNLIERQKITGRSTHWCPNCQK). Catalysis depends on Arg-282, which acts as the Proton donor; for delta-elimination activity.

This sequence belongs to the FPG family. As to quaternary structure, monomer. It depends on Zn(2+) as a cofactor.

The enzyme catalyses Hydrolysis of DNA containing ring-opened 7-methylguanine residues, releasing 2,6-diamino-4-hydroxy-5-(N-methyl)formamidopyrimidine.. It catalyses the reaction 2'-deoxyribonucleotide-(2'-deoxyribose 5'-phosphate)-2'-deoxyribonucleotide-DNA = a 3'-end 2'-deoxyribonucleotide-(2,3-dehydro-2,3-deoxyribose 5'-phosphate)-DNA + a 5'-end 5'-phospho-2'-deoxyribonucleoside-DNA + H(+). Functionally, involved in base excision repair of DNA damaged by oxidation or by mutagenic agents. Acts as a DNA glycosylase that recognizes and removes damaged bases. Has a preference for oxidized purines, such as 7,8-dihydro-8-oxoguanine (8-oxoG). Has AP (apurinic/apyrimidinic) lyase activity and introduces nicks in the DNA strand. Cleaves the DNA backbone by beta-delta elimination to generate a single-strand break at the site of the removed base with both 3'- and 5'-phosphates. The polypeptide is Formamidopyrimidine-DNA glycosylase (Prochlorococcus marinus (strain MIT 9301)).